A 124-amino-acid polypeptide reads, in one-letter code: MATINQLVRKGRKRRVAKSNVPALEASPQKRGVCTRVYTTTPKKPNSALRKVARVRLTNNYEVSSYIGGEGHNLQEHSVVLIRGGRVKDLPGVRYHVVRGAADTAGVDKRRQGRSKYGAKRPKS.

Positions 1 to 29 are disordered; the sequence is MATINQLVRKGRKRRVAKSNVPALEASPQ. Position 89 is a 3-methylthioaspartic acid (aspartate 89). The interval 101-124 is disordered; it reads AADTAGVDKRRQGRSKYGAKRPKS. Basic residues predominate over residues 111 to 124; that stretch reads RQGRSKYGAKRPKS.

This sequence belongs to the universal ribosomal protein uS12 family. In terms of assembly, part of the 30S ribosomal subunit. Contacts proteins S8 and S17. May interact with IF1 in the 30S initiation complex.

Functionally, with S4 and S5 plays an important role in translational accuracy. Interacts with and stabilizes bases of the 16S rRNA that are involved in tRNA selection in the A site and with the mRNA backbone. Located at the interface of the 30S and 50S subunits, it traverses the body of the 30S subunit contacting proteins on the other side and probably holding the rRNA structure together. The combined cluster of proteins S8, S12 and S17 appears to hold together the shoulder and platform of the 30S subunit. In Alkalilimnicola ehrlichii (strain ATCC BAA-1101 / DSM 17681 / MLHE-1), this protein is Small ribosomal subunit protein uS12.